Reading from the N-terminus, the 406-residue chain is Peptidase T (406 aa).

Position 78 (histidine 78) interacts with Zn(2+). The active site involves aspartate 80. Aspartate 139 lines the Zn(2+) pocket. Catalysis depends on glutamate 173, which acts as the Proton acceptor. Residues glutamate 174, aspartate 196, and histidine 378 each coordinate Zn(2+).

The protein belongs to the peptidase M20B family. Zn(2+) serves as cofactor.

It is found in the cytoplasm. It carries out the reaction Release of the N-terminal residue from a tripeptide.. Its function is as follows. Cleaves the N-terminal amino acid of tripeptides. This chain is Peptidase T, found in Clostridium perfringens (strain ATCC 13124 / DSM 756 / JCM 1290 / NCIMB 6125 / NCTC 8237 / Type A).